Here is a 134-residue protein sequence, read N- to C-terminus: UPF0102 protein Rmet_3430 (134 aa).

It belongs to the UPF0102 family.

In Cupriavidus metallidurans (strain ATCC 43123 / DSM 2839 / NBRC 102507 / CH34) (Ralstonia metallidurans), this protein is UPF0102 protein Rmet_3430.